The primary structure comprises 308 residues: 1,4-dihydroxy-2-naphthoate octaprenyltransferase (308 aa).

9 helical membrane-spanning segments follow: residues 22-42 (TLPL…WANP), 47-67 (GLVM…SNFA), 101-121 (WGLI…IGIA), 129-149 (FAFA…TVGV), 153-173 (GYMG…GVGG), 186-206 (IILP…INNL), 235-255 (ILLS…AISW), 256-276 (TNYL…FVYC), and 286-306 (ILAQ…LGLL).

It belongs to the MenA family. Type 1 subfamily.

It localises to the cell inner membrane. It carries out the reaction an all-trans-polyprenyl diphosphate + 1,4-dihydroxy-2-naphthoate + H(+) = a 2-demethylmenaquinol + CO2 + diphosphate. Its pathway is quinol/quinone metabolism; menaquinone biosynthesis; menaquinol from 1,4-dihydroxy-2-naphthoate: step 1/2. In terms of biological role, conversion of 1,4-dihydroxy-2-naphthoate (DHNA) to demethylmenaquinone (DMK). The sequence is that of 1,4-dihydroxy-2-naphthoate octaprenyltransferase from Haemophilus influenzae (strain ATCC 51907 / DSM 11121 / KW20 / Rd).